A 220-amino-acid polypeptide reads, in one-letter code: Protein-L-isoaspartate O-methyltransferase (220 aa).

The active site involves serine 65.

Belongs to the methyltransferase superfamily. L-isoaspartyl/D-aspartyl protein methyltransferase family.

Its subcellular location is the cytoplasm. The enzyme catalyses [protein]-L-isoaspartate + S-adenosyl-L-methionine = [protein]-L-isoaspartate alpha-methyl ester + S-adenosyl-L-homocysteine. In terms of biological role, catalyzes the methyl esterification of L-isoaspartyl residues in peptides and proteins that result from spontaneous decomposition of normal L-aspartyl and L-asparaginyl residues. It plays a role in the repair and/or degradation of damaged proteins. The polypeptide is Protein-L-isoaspartate O-methyltransferase (Pelodictyon phaeoclathratiforme (strain DSM 5477 / BU-1)).